A 180-amino-acid chain; its full sequence is NADH-quinone oxidoreductase subunit I (180 aa).

4Fe-4S ferredoxin-type domains are found at residues 50 to 80 and 90 to 119; these read LTRDPDGEERCVACNLCAVACPVGCISLQKA and EFFRINFSRCIFCGLCEEACPTTAIQLTPD. Positions 60, 63, 66, 70, 99, 102, 105, and 109 each coordinate [4Fe-4S] cluster.

It belongs to the complex I 23 kDa subunit family. NDH-1 is composed of 13 different subunits. Subunits NuoA, H, J, K, L, M, N constitute the membrane sector of the complex. Requires [4Fe-4S] cluster as cofactor.

It is found in the cell inner membrane. The catalysed reaction is a quinone + NADH + 5 H(+)(in) = a quinol + NAD(+) + 4 H(+)(out). Its function is as follows. NDH-1 shuttles electrons from NADH, via FMN and iron-sulfur (Fe-S) centers, to quinones in the respiratory chain. The immediate electron acceptor for the enzyme in this species is believed to be ubiquinone. Couples the redox reaction to proton translocation (for every two electrons transferred, four hydrogen ions are translocated across the cytoplasmic membrane), and thus conserves the redox energy in a proton gradient. The sequence is that of NADH-quinone oxidoreductase subunit I from Yersinia pseudotuberculosis serotype O:1b (strain IP 31758).